Reading from the N-terminus, the 439-residue chain is Protein ABHD8 (439 aa).

2 disordered regions span residues Ala-49 to Gly-70 and Pro-124 to Arg-156. Residues Ala-136–Gly-145 show a composition bias toward gly residues. Basic residues predominate over residues Gly-146–Arg-156. An AB hydrolase-1 domain is found at Val-177–Gly-279. Catalysis depends on charge relay system residues Ser-252, Asp-370, and His-398.

This sequence belongs to the AB hydrolase superfamily. As to quaternary structure, interacts with NLRP3 (via NACHT and LLR domains); this interaction is enhanced in the presence of NLRP3 inflammasome inducers, such as ATP, nigericin, silica, or alum. Interacts with ZDHHC12. (Microbial infection) Interacts with SARS-CoV-2 nucleoprotein N; this interaction disrupts the NLRP3-ABHD8 association, enhancing NLRP3 stability, ultimately leading to increased inflammasome activation.

It is found in the cytoplasm. Negatively regulates NLRP3-driven inflammation. Promotes NLRP3 degradation through the chaperone-mediated autophagy (CMA) pathway, hence attenuating inflammasome activation and IL1B secretion. Acts by recruiting palmitoyltransferase ZDHHC12 to NLRP3, facilitating NLRP3 palmitoylation and subsequent degradation. The polypeptide is Protein ABHD8 (Homo sapiens (Human)).